The sequence spans 394 residues: 8-amino-7-oxononanoate synthase (394 aa).

Arginine 21 contributes to the substrate binding site. Pyridoxal 5'-phosphate is bound at residue 112 to 113; the sequence is GY. Histidine 137 contributes to the substrate binding site. Serine 183, histidine 211, and threonine 239 together coordinate pyridoxal 5'-phosphate. Lysine 242 carries the N6-(pyridoxal phosphate)lysine modification. Threonine 358 contacts substrate.

It belongs to the class-II pyridoxal-phosphate-dependent aminotransferase family. BioF subfamily. In terms of assembly, homodimer. The cofactor is pyridoxal 5'-phosphate.

The catalysed reaction is 6-carboxyhexanoyl-[ACP] + L-alanine + H(+) = (8S)-8-amino-7-oxononanoate + holo-[ACP] + CO2. Its pathway is cofactor biosynthesis; biotin biosynthesis. In terms of biological role, catalyzes the decarboxylative condensation of pimeloyl-[acyl-carrier protein] and L-alanine to produce 8-amino-7-oxononanoate (AON), [acyl-carrier protein], and carbon dioxide. The sequence is that of 8-amino-7-oxononanoate synthase from Burkholderia pseudomallei (strain K96243).